We begin with the raw amino-acid sequence, 458 residues long: ATP synthase subunit beta (458 aa).

Gly148–Thr155 provides a ligand contact to ATP.

The protein belongs to the ATPase alpha/beta chains family. F-type ATPases have 2 components, CF(1) - the catalytic core - and CF(0) - the membrane proton channel. CF(1) has five subunits: alpha(3), beta(3), gamma(1), delta(1), epsilon(1). CF(0) has three main subunits: a(1), b(2) and c(9-12). The alpha and beta chains form an alternating ring which encloses part of the gamma chain. CF(1) is attached to CF(0) by a central stalk formed by the gamma and epsilon chains, while a peripheral stalk is formed by the delta and b chains.

It localises to the cell inner membrane. It carries out the reaction ATP + H2O + 4 H(+)(in) = ADP + phosphate + 5 H(+)(out). Produces ATP from ADP in the presence of a proton gradient across the membrane. The catalytic sites are hosted primarily by the beta subunits. In Ectopseudomonas mendocina (strain ymp) (Pseudomonas mendocina), this protein is ATP synthase subunit beta.